Here is a 282-residue protein sequence, read N- to C-terminus: MVDTLPTPKHAPLAGVIGWPVAHSRSPRLHGHWLERYGIAGHYVSLPVMPEHLAEVLRAMPHMGFVGANVTIPHKESVLALADVVTDRAALIGAANTLIFRADGKIHADNTDGYGFIANIRQHAPDWIPDLGPAAVIGAGGAARAVVASLLESGVPELRIANRTRIRAEQIRAEFGAKVVVYDWAQAGNMLEGAMTVVNATSMGMEGKPPLRVPLEALAPSTLVTDLVYTPLMTPFLAEAQARGCEVVDGLGMLLHQAAPGFERWFGQRPEVDDDLRRAVLA.

Shikimate is bound by residues 24-26 (SRS) and threonine 71. Residue lysine 75 is the Proton acceptor of the active site. Aspartate 87 contributes to the NADP(+) binding site. Residues asparagine 96 and aspartate 112 each contribute to the shikimate site. Residues 138–142 (GAGGA), 162–167 (NRTRIR), and leucine 227 each bind NADP(+). Shikimate is bound at residue tyrosine 229. NADP(+) is bound at residue glycine 250.

This sequence belongs to the shikimate dehydrogenase family. As to quaternary structure, homodimer.

It catalyses the reaction shikimate + NADP(+) = 3-dehydroshikimate + NADPH + H(+). The protein operates within metabolic intermediate biosynthesis; chorismate biosynthesis; chorismate from D-erythrose 4-phosphate and phosphoenolpyruvate: step 4/7. Involved in the biosynthesis of the chorismate, which leads to the biosynthesis of aromatic amino acids. Catalyzes the reversible NADPH linked reduction of 3-dehydroshikimate (DHSA) to yield shikimate (SA). This chain is Shikimate dehydrogenase (NADP(+)), found in Paracoccus denitrificans (strain Pd 1222).